Reading from the N-terminus, the 468-residue chain is Microtubule-associated tyrosine carboxypeptidase 1 (468 aa).

Over residues 1–10 the composition is skewed to polar residues; it reads MVLDSGTQVY. Disordered regions lie at residues 1 to 39 and 77 to 112; these read MVLD…PPLY and MKRS…TLRP. Zn(2+) is bound at residue histidine 277. Glutamate 278 acts as the Nucleophile in catalysis. Zn(2+) is bound by residues histidine 282 and glutamate 313.

This sequence belongs to the peptidase MATCAP family. Zn(2+) is required as a cofactor.

It is found in the cytoplasm. The protein resides in the cytoskeleton. The catalysed reaction is C-terminal L-alpha-aminoacyl-L-glutamyl-L-glutamyl-L-tyrosyl-[tubulin] + H2O = C-terminal L-alpha-aminoacyl-L-glutamyl-L-glutamyl-[tubulin] + L-tyrosine. The enzyme catalyses C-terminal L-alpha-aminoacyl-L-glutamyl-L-glutamyl-L-phenylalanyl-[tubulin] + H2O = C-terminal L-alpha-aminoacyl-L-glutamyl-L-glutamyl-[tubulin] + L-phenylalanine. In terms of biological role, tyrosine carboxypeptidase that removes the C-terminal tyrosine residue of alpha-tubulin, thereby regulating microtubule dynamics and function. Also able to remove the C-terminal phenylalanine residue of alpha-tubulin TUBA8. Recognizes adjacent tubulin dimers along the same protofilament. The polypeptide is Microtubule-associated tyrosine carboxypeptidase 1 (Rattus norvegicus (Rat)).